The chain runs to 38 residues: Large ribosomal subunit protein bL36 (38 aa).

This sequence belongs to the bacterial ribosomal protein bL36 family.

The polypeptide is Large ribosomal subunit protein bL36 (Kosmotoga olearia (strain ATCC BAA-1733 / DSM 21960 / TBF 19.5.1)).